A 225-amino-acid polypeptide reads, in one-letter code: Fibroblast growth factor 11 (225 aa).

The segment at 1-28 (MAALASSLIRQKREVREPGGSRPVSAQR) is disordered.

This sequence belongs to the heparin-binding growth factors family. In terms of tissue distribution, brain and eye, and in a segmental pattern of the embryonic body wall. In adult olfactory bulb, hippocampus and most concentrated in Purkinje cell layer of the cerebellum.

It localises to the nucleus. Functionally, probably involved in nervous system development and function. The sequence is that of Fibroblast growth factor 11 (Fgf11) from Mus musculus (Mouse).